We begin with the raw amino-acid sequence, 468 residues long: 6-phosphogluconate dehydrogenase, decarboxylating (468 aa).

NADP(+)-binding positions include 10-15, 33-35, 74-76, and Asn-102; these read GMAVMG, NRT, and VQS. Residues Asn-102 and 128-130 contribute to the substrate site; that span reads SGG. Lys-182 serves as the catalytic Proton acceptor. Position 185–186 (185–186) interacts with substrate; that stretch reads HN. The active-site Proton donor is Glu-189. Residues Tyr-190, Lys-259, Arg-286, Arg-445, and His-451 each contribute to the substrate site.

It belongs to the 6-phosphogluconate dehydrogenase family. As to quaternary structure, homodimer.

The enzyme catalyses 6-phospho-D-gluconate + NADP(+) = D-ribulose 5-phosphate + CO2 + NADPH. It participates in carbohydrate degradation; pentose phosphate pathway; D-ribulose 5-phosphate from D-glucose 6-phosphate (oxidative stage): step 3/3. Catalyzes the oxidative decarboxylation of 6-phosphogluconate to ribulose 5-phosphate and CO(2), with concomitant reduction of NADP to NADPH. This Buchnera aphidicola subsp. Acyrthosiphon pisum (strain APS) (Acyrthosiphon pisum symbiotic bacterium) protein is 6-phosphogluconate dehydrogenase, decarboxylating (gnd).